The chain runs to 189 residues: Dual specificity phosphatase 21 (189 aa).

The Tyrosine-protein phosphatase domain occupies 20-161 (GLSQITASLF…LIHYEFKLFS (142 aa)). Residues 43–128 (SNNHITTIIN…YLMKYHNMTL (86 aa)) are sufficient for mitochondrial localization. C105 serves as the catalytic Phosphocysteine intermediate.

Belongs to the protein-tyrosine phosphatase family. Non-receptor class dual specificity subfamily. Microtubule inner protein component of sperm flagellar doublet microtubules. In terms of tissue distribution, selectively expressed in testis.

The protein localises to the cytoplasm. Its subcellular location is the nucleus. The protein resides in the mitochondrion inner membrane. It localises to the cytoskeleton. It is found in the flagellum axoneme. The catalysed reaction is O-phospho-L-tyrosyl-[protein] + H2O = L-tyrosyl-[protein] + phosphate. The enzyme catalyses O-phospho-L-seryl-[protein] + H2O = L-seryl-[protein] + phosphate. It carries out the reaction O-phospho-L-threonyl-[protein] + H2O = L-threonyl-[protein] + phosphate. Functionally, protein phosphatase component of the sperm flagellar doublet microtubules. May act as a regulator of sperm motility by mediating dephosphorylation of sperm doublet microtubule proteins. Can dephosphorylate single and diphosphorylated synthetic MAPK peptides, with preference for the phosphotyrosine and diphosphorylated forms over phosphothreonine. This chain is Dual specificity phosphatase 21, found in Mus musculus (Mouse).